The sequence spans 516 residues: MSQPDKVLILDFGSQYTQLIARRVREAGVYSEIHPCTVTAKEVAAMAPKAVILSGGPSSVADADAPPFDPAVFDLGLPMLCICYGMQLLAHHLPGGQVAASTDREYGRADLQLLADTPLFAGLPQKDGHIVWMSHGDKVMAAPDGFVVAARTKNVDIAALANASRRIYALQFHPEVAHTEDGERILHNFLFEIAGLTSGWTMSSFLETELASLKEKVGDDEVVCALSGGVDSTVVAVMLHKAIGKKLHCIFVDNGLLRMGEGEEVAAYLREHFDLNLHYVDAAKLFLDKLAGVTDPEEKRKIIGKTFIEVFEVEAAKLPKVKYLAQGTLYPDVIESVSFKGPSAVIKSHHNVGGLPEVMKLALIEPLRELFKDEVRKVAVELGMPDFIIWRHPFPGPGLAIRIIGEVTEERLEILRRTDKIVQSELVASGWYRKVWQGFAVLLPLKTVGVMGDGRTYENVAAIRVVDSLDAMTADWSRLPSEILAVMSNRIINEVKGVNRVVFDVSSKPPATIEWE.

Positions 6–199 (KVLILDFGSQ…LFEIAGLTSG (194 aa)) constitute a Glutamine amidotransferase type-1 domain. Cys83 (nucleophile) is an active-site residue. Residues His173 and Glu175 contribute to the active site. The 192-residue stretch at 200–391 (WTMSSFLETE…LGMPDFIIWR (192 aa)) folds into the GMPS ATP-PPase domain. 227–233 (SGGVDST) lines the ATP pocket.

Homodimer.

The catalysed reaction is XMP + L-glutamine + ATP + H2O = GMP + L-glutamate + AMP + diphosphate + 2 H(+). Its pathway is purine metabolism; GMP biosynthesis; GMP from XMP (L-Gln route): step 1/1. In terms of biological role, catalyzes the synthesis of GMP from XMP. The polypeptide is GMP synthase [glutamine-hydrolyzing] (Solidesulfovibrio magneticus (strain ATCC 700980 / DSM 13731 / RS-1) (Desulfovibrio magneticus)).